The following is a 385-amino-acid chain: Trichodiene synthase (385 aa).

Belongs to the trichodiene synthase family.

The enzyme catalyses (2E,6E)-farnesyl diphosphate = trichodiene + diphosphate. It participates in sesquiterpene biosynthesis; trichothecene biosynthesis. Functionally, TS is a member of the terpene cyclase group of enzymes. It catalyzes the isomerization and cyclization of farnesyl pyro-phosphate to form trichodiene, the first cyclic intermediate in the biosynthetic pathway for trichothecenes. It serves to branch trichothecene biosynthesis from the isoprenoid pathway. This chain is Trichodiene synthase (TRI5), found in Paramyrothecium roridum (Myrothecium leaf spot fungus).